Reading from the N-terminus, the 1058-residue chain is Carbamoyl phosphate synthase large chain (1058 aa).

Residues 1-401 (MPKRKDIQKI…SLLKACRSLE (401 aa)) are carboxyphosphate synthetic domain. Residues R129, R169, G175, G176, R208, I210, E215, G241, I242, H243, Q284, and E298 each coordinate ATP. In terms of domain architecture, ATP-grasp 1 spans 133–327 (KQLMQELDQP…IAKLAAKIAV (195 aa)). Residues Q284, E298, and N300 each contribute to the Mg(2+) site. 3 residues coordinate Mn(2+): Q284, E298, and N300. The tract at residues 402–546 (IGVCHNEMTS…YSTYELENES (145 aa)) is oligomerization domain. The tract at residues 547-929 (VQSNKESILV…ALYKAFEANN (383 aa)) is carbamoyl phosphate synthetic domain. Positions 671–861 (EKALKELGIP…MAQIATKLIL (191 aa)) constitute an ATP-grasp 2 domain. Residues R707, S746, I748, E752, G777, V778, H779, S780, Q820, and E832 each coordinate ATP. Residues Q820, E832, and N834 each coordinate Mg(2+). Mn(2+) is bound by residues Q820, E832, and N834. One can recognise an MGS-like domain in the interval 930-1058 (SHLSEFGQIV…ESRCFNIEAI (129 aa)). The tract at residues 930-1058 (SHLSEFGQIV…ESRCFNIEAI (129 aa)) is allosteric domain.

The protein belongs to the CarB family. As to quaternary structure, composed of two chains; the small (or glutamine) chain promotes the hydrolysis of glutamine to ammonia, which is used by the large (or ammonia) chain to synthesize carbamoyl phosphate. Tetramer of heterodimers (alpha,beta)4. Mg(2+) serves as cofactor. Requires Mn(2+) as cofactor.

It catalyses the reaction hydrogencarbonate + L-glutamine + 2 ATP + H2O = carbamoyl phosphate + L-glutamate + 2 ADP + phosphate + 2 H(+). The catalysed reaction is hydrogencarbonate + NH4(+) + 2 ATP = carbamoyl phosphate + 2 ADP + phosphate + 2 H(+). It participates in amino-acid biosynthesis; L-arginine biosynthesis; carbamoyl phosphate from bicarbonate: step 1/1. Its pathway is pyrimidine metabolism; UMP biosynthesis via de novo pathway; (S)-dihydroorotate from bicarbonate: step 1/3. Functionally, large subunit of the glutamine-dependent carbamoyl phosphate synthetase (CPSase). CPSase catalyzes the formation of carbamoyl phosphate from the ammonia moiety of glutamine, carbonate, and phosphate donated by ATP, constituting the first step of 2 biosynthetic pathways, one leading to arginine and/or urea and the other to pyrimidine nucleotides. The large subunit (synthetase) binds the substrates ammonia (free or transferred from glutamine from the small subunit), hydrogencarbonate and ATP and carries out an ATP-coupled ligase reaction, activating hydrogencarbonate by forming carboxy phosphate which reacts with ammonia to form carbamoyl phosphate. The polypeptide is Carbamoyl phosphate synthase large chain (Streptococcus pyogenes serotype M6 (strain ATCC BAA-946 / MGAS10394)).